Consider the following 307-residue polypeptide: Atrochrysone carboxyl ACP thioesterase (307 aa).

Positions 104, 106, 108, and 109 each coordinate Zn(2+). The active-site Proton donor/acceptor is the Asp108.

This sequence belongs to the metallo-beta-lactamase superfamily. Zn(2+) serves as cofactor.

It carries out the reaction atrochrysone carboxyl-[ACP] + H2O = atrochrysone carboxylate + holo-[ACP] + H(+). The protein operates within secondary metabolite biosynthesis. In terms of biological role, atrochrysone carboxyl ACP thioesterase; part of the gene cluster that mediates the biosynthesis of monodictyphenone, a prenyl xanthone derivative. The pathway begins with the synthesis of atrochrysone thioester by the polyketide synthase (PKS) mdpG. The atrochrysone carboxyl ACP thioesterase mdpF then breaks the thioester bond and releases the atrochrysone carboxylic acid from mdpG. The atrochrysone carboxylic acid is then converted to atrochrysone which is further transformed into emodin anthrone. The next step is performed by the anthrone oxygenase mdpH that catalyzes the oxidation of emodinanthrone to emodin. Emodin is further modified to yield monodictyphenone via several steps involving mdpB, mdpC mdpJ, mdpK and mdpL. The short chain dehydrogenase mdpC converts the tautomers of emodin hydroquinone into the 3-hydroxy-3,4-dihydroan-thracen-1(2H)-one derivative. These enzymes with xptA, xptB and xptC are also proposed to be involved in the synthesis of shamixanthone from emodin. Especially, direct reduction of emodin by the short chain dehydrogenase mdpC followed by dehydration catalyzed by the scytalone dehydratase-like protein mdpB gives loss of oxygen and formation of chrysophanol intermediate in two simple steps. This chain is Atrochrysone carboxyl ACP thioesterase, found in Emericella nidulans (strain FGSC A4 / ATCC 38163 / CBS 112.46 / NRRL 194 / M139) (Aspergillus nidulans).